Reading from the N-terminus, the 431-residue chain is Citrate synthase 1 (431 aa).

Active-site residues include H309 and D366.

This sequence belongs to the citrate synthase family. In terms of assembly, homohexamer.

It carries out the reaction oxaloacetate + acetyl-CoA + H2O = citrate + CoA + H(+). Its pathway is carbohydrate metabolism; tricarboxylic acid cycle; isocitrate from oxaloacetate: step 1/2. In Mycobacterium tuberculosis (strain CDC 1551 / Oshkosh), this protein is Citrate synthase 1 (gltA2).